We begin with the raw amino-acid sequence, 177 residues long: ATP-dependent protease subunit HslV (177 aa).

Threonine 6 is an active-site residue. Residues alanine 162, cysteine 165, and threonine 168 each contribute to the Na(+) site.

It belongs to the peptidase T1B family. HslV subfamily. A double ring-shaped homohexamer of HslV is capped on each side by a ring-shaped HslU homohexamer. The assembly of the HslU/HslV complex is dependent on binding of ATP.

The protein resides in the cytoplasm. It carries out the reaction ATP-dependent cleavage of peptide bonds with broad specificity.. With respect to regulation, allosterically activated by HslU binding. Functionally, protease subunit of a proteasome-like degradation complex believed to be a general protein degrading machinery. This chain is ATP-dependent protease subunit HslV, found in Lawsonia intracellularis (strain PHE/MN1-00).